The sequence spans 2115 residues: Nuclear mitotic apparatus protein 1 (2115 aa).

The segment at 1-212 (MTLHATRGAA…SPMGDILQTP (212 aa)) is head (Globular). Ser-162 is modified (phosphoserine). Position 163 is a phosphothreonine (Thr-163). Phosphoserine occurs at positions 169 and 203. Thr-211 bears the Phosphothreonine mark. Residues 213–1699 (QFQMRRLKKQ…ADQQLRDLGK (1487 aa)) are a coiled coil. Ser-271 is subject to Phosphoserine. Lys-379 carries the N6-acetyllysine modification. Residues Ser-388 and Ser-395 each carry the phosphoserine modification. The segment covering 549-560 (LRHQVEQLSSSL) has biased composition (low complexity). 2 disordered regions span residues 549-593 (LRHQ…EERE) and 746-766 (LVEQHKRERKELEEERAGRKG). Basic and acidic residues predominate over residues 561-581 (KQKEQQLKEVAEKQEATRQDH). Ser-820 carries the post-translational modification Phosphoserine. The residue at position 891 (Lys-891) is an N6-acetyllysine. Composition is skewed to basic and acidic residues over residues 926–950 (AGEQQETASRELVKEPARAGDRQPE) and 996–1013 (QEERGQQEREVARLTQER). Disordered stretches follow at residues 926 to 958 (AGEQQETASRELVKEPARAGDRQPEWLEEQQGR) and 988 to 1013 (LMESQGQQQEERGQQEREVARLTQER). At Thr-1047 the chain carries Phosphothreonine; by PLK1. Over residues 1090–1102 (LKEQLAKKEKEHA) the composition is skewed to basic and acidic residues. Disordered stretches follow at residues 1090 to 1225 (LKEQ…RKNS) and 1275 to 1296 (ETASNSARAAERSSALREEVQS). 2 stretches are compositionally biased toward low complexity: residues 1103–1112 (SGSGAQSEAA) and 1133–1142 (EQQCQKQQEQ). Basic and acidic residues predominate over residues 1145 to 1163 (SLERSLEAERASRAERDSA). Phosphoserine is present on Ser-1187. Over residues 1198 to 1224 (KVQDHSKAEDEWKAQVARGRQEAERKN) the composition is skewed to basic and acidic residues. Phosphoserine is present on Ser-1225. A compositionally biased stretch (basic and acidic residues) spans 1283–1296 (AAERSSALREEVQS). The residue at position 1511 (Lys-1511) is an N6-acetyllysine. Position 1601 is a phosphoserine (Ser-1601). A Glycyl lysine isopeptide (Lys-Gly) (interchain with G-Cter in SUMO2) cross-link involves residue Lys-1699. Residues 1699–1876 (KFQVATDALK…NSALLSLPGY (178 aa)) form a membrane-binding domain 1 region. Positions 1700–2115 (FQVATDALKS…TPRAKGKAKH (416 aa)) are tail (Globular). 3 positions are modified to phosphoserine: Ser-1721, Ser-1724, and Ser-1728. The disordered stretch occupies residues 1734 to 1761 (PLSITSKLPRTQPDGTSVPGEPASPISQ). Positions 1735–1748 (LSITSKLPRTQPDG) are enriched in polar residues. The Tankyrase-binding domain motif lies at 1742–1748 (PRTQPDG). Ser-1757 and Ser-1760 each carry phosphoserine. Lys-1766 participates in a covalent cross-link: Glycyl lysine isopeptide (Lys-Gly) (interchain with G-Cter in SUMO1); alternate. Lys-1766 is covalently cross-linked (Glycyl lysine isopeptide (Lys-Gly) (interchain with G-Cter in SUMO2); alternate). Residues Ser-1769 and Ser-1772 each carry the phosphoserine; by PLK1 modification. At Tyr-1774 the chain carries Phosphotyrosine. At Thr-1776 the chain carries Phosphothreonine. Ser-1788 is subject to Phosphoserine. Positions 1788–1810 (SSLDSLGDVFLDSGRKTRSARRR) are 4.1-binding domain. Residue Ser-1789 is modified to Phosphoserine; by PLK1. 2 positions are modified to phosphoserine: Ser-1792 and Ser-1800. At Thr-1804 the chain carries Phosphothreonine. Lys-1822 participates in a covalent cross-link: Glycyl lysine isopeptide (Lys-Gly) (interchain with G-Cter in SUMO2). Disordered regions lie at residues 1826–1901 (EEPD…GRNS) and 1955–2115 (EMKT…KAKH). Residues Ser-1830 and Ser-1833 each carry the phosphoserine modification. Positions 1830–1857 (SANSSFYSTRSAPASQASLRATSSTQSL) are enriched in polar residues. Ser-1834 carries the phosphoserine; by PLK1 modification. Tyr-1836 is modified (phosphotyrosine). At Ser-1840 the chain carries Phosphoserine. Position 1844 is a phosphoserine; alternate (Ser-1844). O-linked (GlcNAc) serine; alternate glycosylation is present at Ser-1844. 2 positions are modified to phosphoserine: Ser-1862 and Ser-1887. Residues 1879 to 1891 (TTRSSARRSQAGV) are compositionally biased toward polar residues. The tubulin-binding domain stretch occupies residues 1882–1985 (SSARRSQAGV…AEGTGITTRQ (104 aa)). The segment at 1892 to 1926 (SSGAPPGRNSFYMGTCQDEPEQLDDWNRIAELQQR) is GPSM2-binding domain. A compositionally biased stretch (basic and acidic residues) spans 1955–1966 (EMKTGDPQETLR). Ser-1969 is modified (phosphoserine). Positions 1981–2060 (ITTRQQRKRV…SILNTPKKLG (80 aa)) are membrane-binding domain 2. The short motif at 1984-1989 (RQQRKR) is the Nuclear localization signal element. Residue Ser-1991 is modified to Phosphoserine. Thr-2000 is modified (phosphothreonine). At Ser-2003 the chain carries Phosphoserine. Thr-2015 carries the phosphothreonine; by CDK1 modification. Positions 2015 to 2032 (TPRDRHEGRKQSTTEAQK) are enriched in basic and acidic residues. Ser-2047 is modified (phosphoserine). A Phosphothreonine; by CDK1 modification is found at Thr-2055. A phosphoserine mark is found at Ser-2062 and Ser-2077. Phosphoserine; by CDK1 is present on Ser-2087. Residues 2089–2108 (RIATTTASAATAAAIGATPR) show a composition bias toward low complexity. Thr-2106 is modified (phosphothreonine; by CDK1).

As to quaternary structure, homodimer. Also forms multiarm oligomers by association of C-terminal tail domains, oligomers may further assemble to form a hexagonal nuclear lattice-like network. Associates with the dynein-dynactin complex; this association promotes the transport and accumulation of NUMA1 at the mitotic spindle poles that is inhibited by the BRISC complex in a PLK1-dependent manner. Part of a spindle orientation complex at least composed of GNAI1, GPSM2 and NUMA1. Interacts (via C-terminus) with microtubules (MTs); this interaction is direct and promotes both MT bundle formation and stability in a dynein-dynactin complex- and CDK1-independent manner. Interacts with EPB41 and EPB41L2; these interactions are negatively regulated by CDK1 during metaphase and are important for anaphase-specific localization of NUMA1 in symmetrically dividing cells. Interacts (via C-terminus) with GPSM2 (via TPR repeats); this interaction is direct, prevented by competitive binding of INSC, is inhibited in a PLK1-dependent manner, blocks the association of NUMA1 with MTs and inhibits NUMA1-induced MT bundle formation, prevents the association of NUMA1 with SPAG5, induces mitotic spindle pole localization of GPSM2, both metaphase cell cortex localization of NUMA1 and mitotic spindle organization. Does not interact with GPSM2 during anaphase. Interacts (via C-terminus) with the nuclear importin alpha/importin beta receptor; this interaction is inhibited by RanGTP. Interacts (via C-terminus) with KPNB1; this interaction is inhibited by RanGTP and the BRISC complex. Interacts with ABRAXAS2 and the BRISC complex; these interactions regulate mitotic spindle assembly. Interacts (via N-terminal end of the coiled-coil domain) with RAE1; this interaction promotes mitotic spindle formation. Interacts (via C-terminus) with SPAG5 (via C-terminus); this interaction promotes the recruitment of SPAG5 to the MTs at spindle poles in a dynein-dynactin-dependent manner and regulates mitotic spindle organization and proper chromosome alignment during mitosis. Interacts with TNKS; this interaction occurs at the onset of mitosis. Interacts with TNKS2. Interacts with tubulin. Interacts with KHDC3L (via C-terminus). Post-translationally, phosphorylation and dephosphorylation on Thr-2055 regulates the extent of cortical NUMA1 and the dynein-dynactin complex localization during mitotic metaphase and anaphase. In metaphase, phosphorylation on Thr-2055 occurs in a kinase CDK1-dependent manner; this phosphorylation maintains low levels of cortical dynein-dynactin complex at metaphase, and hence proper spindle positioning. In anaphase, dephosphorylated on Thr-2055 by phosphatase PPP2CA; this dephosphorylation stimulates its membrane association and with the dynein-dynactin complex its enrichment at the cell cortex, and hence robust spindle elongation. Probably also phosphorylated on Thr-2015 and Ser-2087 by CDK1; these phosphorylations may regulate its cell cortex recruitment during metaphase and anaphase. Phosphorylated on Thr-1047, Ser-1769, Ser-1772, Ser-1789 and Ser-1834 by PLK1; these phosphorylations induce cortical dynein-dynactin complex dissociation from the NUMA1-GPSM2 complex and negatively regulates cortical dynein-dynactin complex localization. In terms of processing, ADP-ribosylated by TNKS at the onset of mitosis; ADP-ribosylation is not required for its localization to spindle poles. O-glycosylated during cytokinesis at sites identical or close to phosphorylation sites, this interferes with the phosphorylation status. Post-translationally, ubiquitinated with 'Lys-63'-linked polyubiquitin chains. Deubiquitination by the BRISC complex is important for the incorporation of NUMA1 into mitotic spindle poles and normal spindle pole function, probably by modulating interactions between NUMA1, dynein-dynactin complex and importin-beta.

It is found in the nucleus. Its subcellular location is the nucleoplasm. It localises to the nucleus matrix. The protein localises to the chromosome. The protein resides in the cytoplasm. It is found in the cytoskeleton. Its subcellular location is the microtubule organizing center. It localises to the centrosome. The protein localises to the spindle pole. The protein resides in the cell cortex. It is found in the cell membrane. Its subcellular location is the lateral cell membrane. It localises to the cytosol. Microtubule (MT)-binding protein that plays a role in the formation and maintenance of the spindle poles and the alignement and the segregation of chromosomes during mitotic cell division. Functions to tether the minus ends of MTs at the spindle poles, which is critical for the establishment and maintenance of the spindle poles. Plays a role in the establishment of the mitotic spindle orientation during metaphase and elongation during anaphase in a dynein-dynactin-dependent manner. In metaphase, part of a ternary complex composed of GPSM2 and G(i) alpha proteins, that regulates the recruitment and anchorage of the dynein-dynactin complex in the mitotic cell cortex regions situated above the two spindle poles, and hence regulates the correct oritentation of the mitotic spindle. During anaphase, mediates the recruitment and accumulation of the dynein-dynactin complex at the cell membrane of the polar cortical region through direct association with phosphatidylinositol 4,5-bisphosphate (PI(4,5)P2), and hence participates in the regulation of the spindle elongation and chromosome segregation. Also binds to other polyanionic phosphoinositides, such as phosphatidylinositol 3-phosphate (PIP), lysophosphatidic acid (LPA) and phosphatidylinositol triphosphate (PIP3), in vitro. Also required for proper orientation of the mitotic spindle during asymmetric cell divisions. Plays a role in mitotic MT aster assembly. Involved in anastral spindle assembly. Positively regulates TNKS protein localization to spindle poles in mitosis. Highly abundant component of the nuclear matrix where it may serve a non-mitotic structural role, occupies the majority of the nuclear volume. Required for epidermal differentiation and hair follicle morphogenesis. In Homo sapiens (Human), this protein is Nuclear mitotic apparatus protein 1.